A 314-amino-acid polypeptide reads, in one-letter code: 1D-myo-inositol 2-acetamido-2-deoxy-alpha-D-glucopyranoside deacetylase 2 (314 aa).

Positions 25, 28, and 161 each coordinate Zn(2+).

It belongs to the MshB deacetylase family. Zn(2+) serves as cofactor.

The catalysed reaction is 1D-myo-inositol 2-acetamido-2-deoxy-alpha-D-glucopyranoside + H2O = 1D-myo-inositol 2-amino-2-deoxy-alpha-D-glucopyranoside + acetate. Catalyzes the deacetylation of 1D-myo-inositol 2-acetamido-2-deoxy-alpha-D-glucopyranoside (GlcNAc-Ins) in the mycothiol biosynthesis pathway. The chain is 1D-myo-inositol 2-acetamido-2-deoxy-alpha-D-glucopyranoside deacetylase 2 from Frankia casuarinae (strain DSM 45818 / CECT 9043 / HFP020203 / CcI3).